The chain runs to 209 residues: Thiamine-phosphate synthase (209 aa).

Residues 38–42 (QYRAK) and Asn70 each bind 4-amino-2-methyl-5-(diphosphooxymethyl)pyrimidine. Positions 71 and 90 each coordinate Mg(2+). Residue Ser109 participates in 4-amino-2-methyl-5-(diphosphooxymethyl)pyrimidine binding. A 2-[(2R,5Z)-2-carboxy-4-methylthiazol-5(2H)-ylidene]ethyl phosphate-binding site is contributed by 135–137 (TST). Lys138 is a 4-amino-2-methyl-5-(diphosphooxymethyl)pyrimidine binding site. 2-[(2R,5Z)-2-carboxy-4-methylthiazol-5(2H)-ylidene]ethyl phosphate-binding positions include Gly165 and 185–186 (VS).

This sequence belongs to the thiamine-phosphate synthase family. Mg(2+) serves as cofactor.

The catalysed reaction is 2-[(2R,5Z)-2-carboxy-4-methylthiazol-5(2H)-ylidene]ethyl phosphate + 4-amino-2-methyl-5-(diphosphooxymethyl)pyrimidine + 2 H(+) = thiamine phosphate + CO2 + diphosphate. It carries out the reaction 2-(2-carboxy-4-methylthiazol-5-yl)ethyl phosphate + 4-amino-2-methyl-5-(diphosphooxymethyl)pyrimidine + 2 H(+) = thiamine phosphate + CO2 + diphosphate. It catalyses the reaction 4-methyl-5-(2-phosphooxyethyl)-thiazole + 4-amino-2-methyl-5-(diphosphooxymethyl)pyrimidine + H(+) = thiamine phosphate + diphosphate. Its pathway is cofactor biosynthesis; thiamine diphosphate biosynthesis; thiamine phosphate from 4-amino-2-methyl-5-diphosphomethylpyrimidine and 4-methyl-5-(2-phosphoethyl)-thiazole: step 1/1. Condenses 4-methyl-5-(beta-hydroxyethyl)thiazole monophosphate (THZ-P) and 2-methyl-4-amino-5-hydroxymethyl pyrimidine pyrophosphate (HMP-PP) to form thiamine monophosphate (TMP). In Persephonella marina (strain DSM 14350 / EX-H1), this protein is Thiamine-phosphate synthase.